A 164-amino-acid chain; its full sequence is FMN reductase (NADH) RutF (164 aa).

The protein belongs to the non-flavoprotein flavin reductase family. RutF subfamily.

It catalyses the reaction FMNH2 + NAD(+) = FMN + NADH + 2 H(+). Functionally, catalyzes the reduction of FMN to FMNH2 which is used to reduce pyrimidine by RutA via the Rut pathway. In Enterobacter cloacae subsp. cloacae (strain ATCC 13047 / DSM 30054 / NBRC 13535 / NCTC 10005 / WDCM 00083 / NCDC 279-56), this protein is FMN reductase (NADH) RutF.